The sequence spans 260 residues: Histidinol-phosphatase (260 aa).

Mg(2+)-binding residues include Glu-67, Asp-83, Ile-85, and Asp-86. Glu-67 contributes to the substrate binding site. Residues 85 to 88 (IDGT), Arg-185, and Asp-213 each bind substrate. Asp-213 is a Mg(2+) binding site.

Belongs to the inositol monophosphatase superfamily. It depends on Mg(2+) as a cofactor.

It catalyses the reaction L-histidinol phosphate + H2O = L-histidinol + phosphate. It functions in the pathway amino-acid biosynthesis; L-histidine biosynthesis; L-histidine from 5-phospho-alpha-D-ribose 1-diphosphate: step 8/9. Functionally, catalyzes the dephosphorylation of histidinol-phosphate to histidinol, the direct precursor of histidine. In Mycobacterium tuberculosis (strain ATCC 25618 / H37Rv), this protein is Histidinol-phosphatase (hisN).